A 322-amino-acid polypeptide reads, in one-letter code: Dirigent protein 9 (322 aa).

The signal sequence occupies residues 1–20 (MAKALHITIFLFLISSNLLA).

The protein belongs to the plant dirigent protein family. In terms of assembly, homodimer.

It localises to the secreted. It is found in the extracellular space. The protein localises to the apoplast. Dirigent proteins impart stereoselectivity on the phenoxy radical-coupling reaction, yielding optically active lignans from two molecules of coniferyl alcohol in the biosynthesis of lignans, flavonolignans, and alkaloids and thus plays a central role in plant secondary metabolism. The protein is Dirigent protein 9 (DIR9) of Arabidopsis thaliana (Mouse-ear cress).